A 410-amino-acid polypeptide reads, in one-letter code: Elongation factor Tu, chloroplastic (410 aa).

Residues 10-214 form the tr-type G domain; the sequence is KPHVNIGTIG…NVDEYIPTPE (205 aa). The tract at residues 19-26 is G1; the sequence is GHVDHGKT. A GTP-binding site is contributed by 19-26; that stretch reads GHVDHGKT. Thr-26 provides a ligand contact to Mg(2+). The interval 60–64 is G2; that stretch reads GITIN. The interval 81-84 is G3; sequence DCPG. Residues 81-85 and 136-139 each bind GTP; these read DCPGH and NKED. The G4 stretch occupies residues 136–139; the sequence is NKED. The interval 174–176 is G5; the sequence is SAL.

This sequence belongs to the TRAFAC class translation factor GTPase superfamily. Classic translation factor GTPase family. EF-Tu/EF-1A subfamily.

The protein resides in the plastid. It localises to the chloroplast stroma. The enzyme catalyses GTP + H2O = GDP + phosphate + H(+). In terms of biological role, GTP hydrolase that promotes the GTP-dependent binding of aminoacyl-tRNA to the A-site of ribosomes during protein biosynthesis. The sequence is that of Elongation factor Tu, chloroplastic (tufA) from Bigelowiella natans (Pedinomonas minutissima).